The chain runs to 424 residues: DNA primase DnaG (424 aa).

One can recognise a Toprim domain in the interval 171 to 245 (DDIIVVEGRA…DVDFVARAPP (75 aa)). The Mg(2+) site is built by glutamate 177, aspartate 219, and aspartate 221.

It belongs to the archaeal DnaG primase family. Forms a ternary complex with MCM helicase and DNA. Mg(2+) is required as a cofactor.

The enzyme catalyses ssDNA + n NTP = ssDNA/pppN(pN)n-1 hybrid + (n-1) diphosphate.. RNA polymerase that catalyzes the synthesis of short RNA molecules used as primers for DNA polymerase during DNA replication. The chain is DNA primase DnaG from Methanocaldococcus jannaschii (strain ATCC 43067 / DSM 2661 / JAL-1 / JCM 10045 / NBRC 100440) (Methanococcus jannaschii).